Consider the following 272-residue polypeptide: NH(3)-dependent NAD(+) synthetase (272 aa).

An ATP-binding site is contributed by 43–50 (GLSGGQDS). Aspartate 49 is a Mg(2+) binding site. Arginine 138 provides a ligand contact to deamido-NAD(+). Threonine 158 is a binding site for ATP. Residue glutamate 163 coordinates Mg(2+). Residues lysine 171 and aspartate 178 each coordinate deamido-NAD(+). ATP-binding residues include lysine 187 and threonine 209. A deamido-NAD(+)-binding site is contributed by 258 to 259 (HK).

This sequence belongs to the NAD synthetase family. As to quaternary structure, homodimer.

The enzyme catalyses deamido-NAD(+) + NH4(+) + ATP = AMP + diphosphate + NAD(+) + H(+). It functions in the pathway cofactor biosynthesis; NAD(+) biosynthesis; NAD(+) from deamido-NAD(+) (ammonia route): step 1/1. In terms of biological role, catalyzes the ATP-dependent amidation of deamido-NAD to form NAD. Uses ammonia as a nitrogen source. The chain is NH(3)-dependent NAD(+) synthetase from Halalkalibacterium halodurans (strain ATCC BAA-125 / DSM 18197 / FERM 7344 / JCM 9153 / C-125) (Bacillus halodurans).